We begin with the raw amino-acid sequence, 177 residues long: Large ribosomal subunit protein uL6 (177 aa).

The protein belongs to the universal ribosomal protein uL6 family. Part of the 50S ribosomal subunit.

Functionally, this protein binds to the 23S rRNA, and is important in its secondary structure. It is located near the subunit interface in the base of the L7/L12 stalk, and near the tRNA binding site of the peptidyltransferase center. This Bordetella avium (strain 197N) protein is Large ribosomal subunit protein uL6.